The primary structure comprises 621 residues: Chaperone protein DnaK (621 aa).

Thr-202 is modified (phosphothreonine; by autocatalysis). The tract at residues 596–621 (SQFAQAAKQNEEKKEEDKKDSEESKN) is disordered. The span at 604–621 (QNEEKKEEDKKDSEESKN) shows a compositional bias: basic and acidic residues.

This sequence belongs to the heat shock protein 70 family.

Its function is as follows. Acts as a chaperone. This Malacoplasma penetrans (strain HF-2) (Mycoplasma penetrans) protein is Chaperone protein DnaK.